Consider the following 347-residue polypeptide: F-box/kelch-repeat protein At5g03020 (347 aa).

The segment at M1–P21 is disordered. The 49-residue stretch at P14 to F62 folds into the F-box domain. 2 Kelch repeats span residues Q119 to G165 and I167 to H215.

The sequence is that of F-box/kelch-repeat protein At5g03020 from Arabidopsis thaliana (Mouse-ear cress).